The primary structure comprises 398 residues: Exodeoxyribonuclease 7 large subunit (398 aa).

This sequence belongs to the XseA family. Heterooligomer composed of large and small subunits.

Its subcellular location is the cytoplasm. It catalyses the reaction Exonucleolytic cleavage in either 5'- to 3'- or 3'- to 5'-direction to yield nucleoside 5'-phosphates.. In terms of biological role, bidirectionally degrades single-stranded DNA into large acid-insoluble oligonucleotides, which are then degraded further into small acid-soluble oligonucleotides. The polypeptide is Exodeoxyribonuclease 7 large subunit (Anaplasma phagocytophilum (strain HZ)).